A 495-amino-acid chain; its full sequence is Glycerol kinase (495 aa).

T12 provides a ligand contact to ADP. Residues T12, T13, and S14 each coordinate ATP. T12 is a sn-glycerol 3-phosphate binding site. R16 is an ADP binding site. 4 residues coordinate sn-glycerol 3-phosphate: R82, E83, Y134, and D243. Residues R82, E83, Y134, D243, and Q244 each contribute to the glycerol site. Residues T265 and G308 each coordinate ADP. ATP is bound by residues T265, G308, Q312, and G409. The ADP site is built by G409 and N413.

Belongs to the FGGY kinase family.

It catalyses the reaction glycerol + ATP = sn-glycerol 3-phosphate + ADP + H(+). Its pathway is polyol metabolism; glycerol degradation via glycerol kinase pathway; sn-glycerol 3-phosphate from glycerol: step 1/1. With respect to regulation, inhibited by fructose 1,6-bisphosphate (FBP). In terms of biological role, key enzyme in the regulation of glycerol uptake and metabolism. Catalyzes the phosphorylation of glycerol to yield sn-glycerol 3-phosphate. This Ectopseudomonas mendocina (strain ymp) (Pseudomonas mendocina) protein is Glycerol kinase.